A 268-amino-acid polypeptide reads, in one-letter code: uncharacterized protein (268 aa).

Residues 21–61 (CVICLQKDGLRAQLSPCGHDQFDYSCICRWMDQSLTCPICK) form an RING-type; degenerate zinc finger.

It is found in the mitochondrion. The protein resides in the nucleus. This is an uncharacterized protein from Schizosaccharomyces pombe (strain 972 / ATCC 24843) (Fission yeast).